Consider the following 102-residue polypeptide: MQKARIKLSSTQHTELDGVCDQIKAIAEKTGVDMAGPIPLPTKALKVTTRKSTDGEGSSSFDRWTMRVHKRVIDIEADERTMKHIMKVRIPDTVQIEIELRN.

It belongs to the universal ribosomal protein uS10 family. As to quaternary structure, part of the 30S ribosomal subunit.

Involved in the binding of tRNA to the ribosomes. The polypeptide is Small ribosomal subunit protein uS10 (Methanococcus maripaludis (strain C7 / ATCC BAA-1331)).